A 478-amino-acid chain; its full sequence is Kynureninase (478 aa).

Pyridoxal 5'-phosphate contacts are provided by residues leucine 150, threonine 151, phenylalanine 178–aspartate 181, serine 234, aspartate 263, histidine 266, and tyrosine 288. Lysine 289 carries the post-translational modification N6-(pyridoxal phosphate)lysine. The pyridoxal 5'-phosphate site is built by tryptophan 318 and asparagine 346.

This sequence belongs to the kynureninase family. As to quaternary structure, homodimer. It depends on pyridoxal 5'-phosphate as a cofactor.

Its subcellular location is the cytoplasm. The enzyme catalyses L-kynurenine + H2O = anthranilate + L-alanine + H(+). It catalyses the reaction 3-hydroxy-L-kynurenine + H2O = 3-hydroxyanthranilate + L-alanine + H(+). It functions in the pathway amino-acid degradation; L-kynurenine degradation; L-alanine and anthranilate from L-kynurenine: step 1/1. It participates in cofactor biosynthesis; NAD(+) biosynthesis; quinolinate from L-kynurenine: step 2/3. Catalyzes the cleavage of L-kynurenine (L-Kyn) and L-3-hydroxykynurenine (L-3OHKyn) into anthranilic acid (AA) and 3-hydroxyanthranilic acid (3-OHAA), respectively. This chain is Kynureninase, found in Caenorhabditis elegans.